The primary structure comprises 138 residues: LQGLLLWLLLSVGGVWASRGPLRPLCRPINATLAAENEACPVCITFTTTICAGYCPSMVRVLPAALPPVPQPVCTYHELHFASIRLPGCPPGVDPMVSFPVALSCRCGPCRLSNSDCGGPRAQSLACDRPLLPGLLFL.

Residues 1 to 17 form the signal peptide; the sequence is LQGLLLWLLLSVGGVWA. 6 cysteine pairs are disulfide-bonded: Cys26–Cys74, Cys40–Cys89, Cys43–Cys127, Cys51–Cys105, Cys55–Cys107, and Cys110–Cys117. Asn30 carries an N-linked (GlcNAc...) asparagine glycan.

Belongs to the glycoprotein hormones subunit beta family. Heterodimer of a common alpha chain and a unique beta chain which confers biological specificity to thyrotropin, lutropin, follitropin and gonadotropin.

It is found in the secreted. Its function is as follows. Promotes spermatogenesis and ovulation by stimulating the testes and ovaries to synthesize steroids. This is Lutropin subunit beta (LHB) from Canis lupus familiaris (Dog).